A 638-amino-acid chain; its full sequence is Signal recognition particle receptor subunit alpha (638 aa).

2 disordered regions span residues 132-244 (APTT…GKKA) and 283-316 (GTGS…TKGT). 2 stretches are compositionally biased toward basic and acidic residues: residues 137–146 (KKFEDSEKAK) and 153–165 (IETR…EKAK). Residue Ser-177 is modified to Phosphoserine. Residues 204 to 239 (LSKEELIRRKREEFIQKHGRGMEKSNKSTKSDAPKE) are compositionally biased toward basic and acidic residues. Thr-284 carries the phosphothreonine modification. Residues Ser-296, Ser-297, and Ser-298 each carry the phosphoserine modification. Over residues 304 to 314 (AQNSTKPSATK) the composition is skewed to polar residues. Positions 419–636 (YVVTFCGVNG…NAKAVVAALM (218 aa)) are NG domain. 425–432 (GVNGVGKS) is a GTP binding site. Ser-473 bears the Phosphoserine mark. Residue 520 to 524 (DTAGR) coordinates GTP. Thr-578 carries the post-translational modification Phosphothreonine. Position 588 to 591 (588 to 591 (TKFD)) interacts with GTP.

This sequence belongs to the GTP-binding SRP family. In terms of assembly, heterodimer with SRPRB. Interacts with the signal recognition particle (SRP) complex subunit SRP54. (Microbial infection) May interact with Zika virus strain Mr-766 non-structural protein 4A/NS4A. May interact with Zika virus French Polynesia 10087PF/2013 non-structural protein 4A/NS4A. As to quaternary structure, (Microbial infection) May interact with Dengue virus DENV2 16681 non-structural protein 4A/NS4A.

The protein localises to the endoplasmic reticulum membrane. Its function is as follows. Component of the signal recognition particle (SRP) complex receptor (SR). Ensures, in conjunction with the SRP complex, the correct targeting of the nascent secretory proteins to the endoplasmic reticulum membrane system. Forms a guanosine 5'-triphosphate (GTP)-dependent complex with the SRP subunit SRP54. SRP receptor compaction and GTPase rearrangement drive SRP-mediated cotranslational protein translocation into the ER. The polypeptide is Signal recognition particle receptor subunit alpha (Homo sapiens (Human)).